We begin with the raw amino-acid sequence, 198 residues long: PEP-dependent dihydroxyacetone kinase 1, ADP-binding subunit DhaL (198 aa).

A DhaL domain is found at 6-194 (DWALRWLNDF…SALLFHAMLQ (189 aa)). Mg(2+) is bound by residues Asp30, Asp35, and Asp37. ADP is bound by residues 38-41 (HGIN), 79-80 (AS), Gly120, Met129, Arg166, and 179-181 (DPG).

As to quaternary structure, homodimer. The dihydroxyacetone kinase complex is composed of a homodimer of DhaM, a homodimer of DhaK and the subunit DhaL. The cofactor is Mg(2+).

It localises to the cytoplasm. The catalysed reaction is dihydroxyacetone + phosphoenolpyruvate = dihydroxyacetone phosphate + pyruvate. The protein operates within polyol metabolism; glycerol degradation. In terms of biological role, ADP-binding subunit of the dihydroxyacetone kinase, which is responsible for the phosphoenolpyruvate (PEP)-dependent phosphorylation of dihydroxyacetone. DhaL-ADP is converted to DhaL-ATP via a phosphoryl group transfer from DhaM and transmits it to dihydroxyacetone binds to DhaK. The polypeptide is PEP-dependent dihydroxyacetone kinase 1, ADP-binding subunit DhaL (Listeria innocua serovar 6a (strain ATCC BAA-680 / CLIP 11262)).